The sequence spans 257 residues: DNA repair protein RecO (257 aa).

Belongs to the RecO family.

In terms of biological role, involved in DNA repair and RecF pathway recombination. This Streptococcus sanguinis (strain SK36) protein is DNA repair protein RecO.